We begin with the raw amino-acid sequence, 100 residues long: NADH-quinone oxidoreductase subunit K (100 aa).

Transmembrane regions (helical) follow at residues 2 to 22 (IPLSWYMALATVLFCIGVAGF), 28 to 48 (IIVMLLSLELMLNGVNLNLVA), and 64 to 84 (FVITVAACEAAVGLGIVICLF).

Belongs to the complex I subunit 4L family. As to quaternary structure, NDH-1 is composed of 14 different subunits. Subunits NuoA, H, J, K, L, M, N constitute the membrane sector of the complex.

It localises to the cell inner membrane. It catalyses the reaction a quinone + NADH + 5 H(+)(in) = a quinol + NAD(+) + 4 H(+)(out). NDH-1 shuttles electrons from NADH, via FMN and iron-sulfur (Fe-S) centers, to quinones in the respiratory chain. The immediate electron acceptor for the enzyme in this species is believed to be ubiquinone. Couples the redox reaction to proton translocation (for every two electrons transferred, four hydrogen ions are translocated across the cytoplasmic membrane), and thus conserves the redox energy in a proton gradient. The polypeptide is NADH-quinone oxidoreductase subunit K (Desulfovibrio desulfuricans (strain ATCC 27774 / DSM 6949 / MB)).